The sequence spans 309 residues: Homoserine kinase (309 aa).

Position 91–101 (91–101) interacts with ATP; sequence PIGSGLGSSAC.

Belongs to the GHMP kinase family. Homoserine kinase subfamily.

It localises to the cytoplasm. The enzyme catalyses L-homoserine + ATP = O-phospho-L-homoserine + ADP + H(+). It functions in the pathway amino-acid biosynthesis; L-threonine biosynthesis; L-threonine from L-aspartate: step 4/5. Its function is as follows. Catalyzes the ATP-dependent phosphorylation of L-homoserine to L-homoserine phosphate. This Erwinia tasmaniensis (strain DSM 17950 / CFBP 7177 / CIP 109463 / NCPPB 4357 / Et1/99) protein is Homoserine kinase.